A 137-amino-acid chain; its full sequence is Large-conductance mechanosensitive channel (137 aa).

Transmembrane regions (helical) follow at residues 9–29 (AFAVKGNVVDMAVGIIIGAAF) and 79–99 (IQTVLDFVIVAFAIFMGVKAI).

The protein belongs to the MscL family. As to quaternary structure, homopentamer.

It localises to the cell inner membrane. Its function is as follows. Channel that opens in response to stretch forces in the membrane lipid bilayer. May participate in the regulation of osmotic pressure changes within the cell. In Pseudomonas aeruginosa (strain ATCC 15692 / DSM 22644 / CIP 104116 / JCM 14847 / LMG 12228 / 1C / PRS 101 / PAO1), this protein is Large-conductance mechanosensitive channel.